A 432-amino-acid chain; its full sequence is Glutamyl-tRNA reductase (432 aa).

Residues 55–58 (TCNR), Ser114, 119–121 (ETQ), and Gln125 contribute to the substrate site. The active-site Nucleophile is Cys56. 194 to 199 (GAGEMI) is a binding site for NADP(+).

The protein belongs to the glutamyl-tRNA reductase family. In terms of assembly, homodimer.

The catalysed reaction is (S)-4-amino-5-oxopentanoate + tRNA(Glu) + NADP(+) = L-glutamyl-tRNA(Glu) + NADPH + H(+). It participates in porphyrin-containing compound metabolism; protoporphyrin-IX biosynthesis; 5-aminolevulinate from L-glutamyl-tRNA(Glu): step 1/2. In terms of biological role, catalyzes the NADPH-dependent reduction of glutamyl-tRNA(Glu) to glutamate 1-semialdehyde (GSA). This Burkholderia orbicola (strain MC0-3) protein is Glutamyl-tRNA reductase.